Reading from the N-terminus, the 254-residue chain is Imidazole glycerol phosphate synthase subunit HisF (254 aa).

Catalysis depends on residues Asp-11 and Asp-130.

It belongs to the HisA/HisF family. In terms of assembly, heterodimer of HisH and HisF.

The protein localises to the cytoplasm. The catalysed reaction is 5-[(5-phospho-1-deoxy-D-ribulos-1-ylimino)methylamino]-1-(5-phospho-beta-D-ribosyl)imidazole-4-carboxamide + L-glutamine = D-erythro-1-(imidazol-4-yl)glycerol 3-phosphate + 5-amino-1-(5-phospho-beta-D-ribosyl)imidazole-4-carboxamide + L-glutamate + H(+). The protein operates within amino-acid biosynthesis; L-histidine biosynthesis; L-histidine from 5-phospho-alpha-D-ribose 1-diphosphate: step 5/9. IGPS catalyzes the conversion of PRFAR and glutamine to IGP, AICAR and glutamate. The HisF subunit catalyzes the cyclization activity that produces IGP and AICAR from PRFAR using the ammonia provided by the HisH subunit. The protein is Imidazole glycerol phosphate synthase subunit HisF of Acidiphilium cryptum (strain JF-5).